A 276-amino-acid chain; its full sequence is Diaminopimelate epimerase (276 aa).

Positions 13, 46, and 66 each coordinate substrate. Cys75 serves as the catalytic Proton donor. Substrate contacts are provided by residues Gly76–Asn77, Asn159, Asn192, and Glu210–Arg211. Cys219 serves as the catalytic Proton acceptor. Gly220–Ser221 provides a ligand contact to substrate.

It belongs to the diaminopimelate epimerase family. As to quaternary structure, homodimer.

The protein localises to the cytoplasm. It catalyses the reaction (2S,6S)-2,6-diaminopimelate = meso-2,6-diaminopimelate. The protein operates within amino-acid biosynthesis; L-lysine biosynthesis via DAP pathway; DL-2,6-diaminopimelate from LL-2,6-diaminopimelate: step 1/1. In terms of biological role, catalyzes the stereoinversion of LL-2,6-diaminopimelate (L,L-DAP) to meso-diaminopimelate (meso-DAP), a precursor of L-lysine and an essential component of the bacterial peptidoglycan. This is Diaminopimelate epimerase from Vibrio campbellii (strain ATCC BAA-1116).